Reading from the N-terminus, the 504-residue chain is 2,3-bisphosphoglycerate-independent phosphoglycerate mutase (504 aa).

Mn(2+)-binding residues include Asp11 and Ser61. The active-site Phosphoserine intermediate is Ser61. Residues His122, 152 to 153, Arg183, Arg189, 255 to 258, and Lys329 contribute to the substrate site; these read RD and RNDR. Positions 396, 400, 437, 438, and 455 each coordinate Mn(2+).

Belongs to the BPG-independent phosphoglycerate mutase family. Monomer. Requires Mn(2+) as cofactor.

It carries out the reaction (2R)-2-phosphoglycerate = (2R)-3-phosphoglycerate. It participates in carbohydrate degradation; glycolysis; pyruvate from D-glyceraldehyde 3-phosphate: step 3/5. Its function is as follows. Catalyzes the interconversion of 2-phosphoglycerate and 3-phosphoglycerate. This Bacteroides thetaiotaomicron (strain ATCC 29148 / DSM 2079 / JCM 5827 / CCUG 10774 / NCTC 10582 / VPI-5482 / E50) protein is 2,3-bisphosphoglycerate-independent phosphoglycerate mutase.